The sequence spans 236 residues: Geranylgeranylglyceryl phosphate synthase (236 aa).

Lysine 13 is a sn-glycerol 1-phosphate binding site. 2 residues coordinate Mg(2+): aspartate 15 and threonine 42. Residues 161–166, glycine 191, and 211–212 contribute to the sn-glycerol 1-phosphate site; these read YVEYSG and GD.

Belongs to the GGGP/HepGP synthase family. Group I subfamily. Requires Mg(2+) as cofactor.

It is found in the cytoplasm. The enzyme catalyses sn-glycerol 1-phosphate + (2E,6E,10E)-geranylgeranyl diphosphate = sn-3-O-(geranylgeranyl)glycerol 1-phosphate + diphosphate. It participates in membrane lipid metabolism; glycerophospholipid metabolism. In terms of biological role, prenyltransferase that catalyzes the transfer of the geranylgeranyl moiety of geranylgeranyl diphosphate (GGPP) to the C3 hydroxyl of sn-glycerol-1-phosphate (G1P). This reaction is the first ether-bond-formation step in the biosynthesis of archaeal membrane lipids. The sequence is that of Geranylgeranylglyceryl phosphate synthase from Halobacterium salinarum (strain ATCC 700922 / JCM 11081 / NRC-1) (Halobacterium halobium).